The following is a 475-amino-acid chain: Exodeoxyribonuclease 7 large subunit (475 aa).

The segment at 452-475 is disordered; the sequence is DHGLNRSSKSKRIKSKQDDQGTLF. The span at 466 to 475 shows a compositional bias: basic and acidic residues; the sequence is SKQDDQGTLF.

It belongs to the XseA family. In terms of assembly, heterooligomer composed of large and small subunits.

It is found in the cytoplasm. The catalysed reaction is Exonucleolytic cleavage in either 5'- to 3'- or 3'- to 5'-direction to yield nucleoside 5'-phosphates.. Bidirectionally degrades single-stranded DNA into large acid-insoluble oligonucleotides, which are then degraded further into small acid-soluble oligonucleotides. The chain is Exodeoxyribonuclease 7 large subunit from Bartonella quintana (strain Toulouse) (Rochalimaea quintana).